The chain runs to 142 residues: Peptide methionine sulfoxide reductase MsrB (142 aa).

A MsrB domain is found at 10 to 132; that stretch reads EEEWKKVLTP…NSVSLNFKTE (123 aa). Cys49, Cys52, Cys98, and Cys101 together coordinate Zn(2+). Cys121 (nucleophile) is an active-site residue.

This sequence belongs to the MsrB Met sulfoxide reductase family. The cofactor is Zn(2+).

It catalyses the reaction L-methionyl-[protein] + [thioredoxin]-disulfide + H2O = L-methionyl-(R)-S-oxide-[protein] + [thioredoxin]-dithiol. This chain is Peptide methionine sulfoxide reductase MsrB, found in Methanosarcina barkeri (strain Fusaro / DSM 804).